The primary structure comprises 88 residues: Small ribosomal subunit protein uS17 (88 aa).

The protein belongs to the universal ribosomal protein uS17 family. As to quaternary structure, part of the 30S ribosomal subunit.

One of the primary rRNA binding proteins, it binds specifically to the 5'-end of 16S ribosomal RNA. In Vesicomyosocius okutanii subsp. Calyptogena okutanii (strain HA), this protein is Small ribosomal subunit protein uS17.